The chain runs to 287 residues: Neuferricin homolog (287 aa).

The first 22 residues, 1 to 22 (MFGLLRHLFKFQFLFVVAAVLG), serve as a signal peptide directing secretion. Residues 61–146 (GTLFTPAELA…KPDDLIGLAG (86 aa)) enclose the Cytochrome b5 heme-binding domain. Positions 175 to 204 (YHHKFLELLEQARDAKRQVEELRARYPGCN) form a coiled coil.

This sequence belongs to the cytochrome b5 family. MAPR subfamily.

It is found in the secreted. Heme-binding protein. This Drosophila melanogaster (Fruit fly) protein is Neuferricin homolog.